The following is a 1218-amino-acid chain: Chitin synthase 4 (1218 aa).

Disordered regions lie at residues 1 to 93 (MAEP…PERN) and 132 to 190 (TVSS…RRQK). Positions 14-34 (TRDKSHSPYRESPSRRLRDVE) are enriched in basic and acidic residues. N-linked (GlcNAc...) asparagine glycosylation occurs at Asn-50. Composition is skewed to polar residues over residues 71 to 80 (SNPNPMSQSD) and 133 to 142 (VSSGSTQQDT). The segment covering 175–190 (RKDTRNLTEEEKRRQK) has biased composition (basic and acidic residues). Asn-180 carries N-linked (GlcNAc...) asparagine glycosylation. Helical transmembrane passes span 200–220 (IWNI…LQCF) and 235–255 (VGLI…TFGF). Asn-365, Asn-404, and Asn-426 each carry an N-linked (GlcNAc...) asparagine glycan. Residues 487 to 507 (VVLYVSLVFILAIVAAKFFLA) form a helical membrane-spanning segment. Disordered stretches follow at residues 548-570 (PKIT…RGSM) and 582-606 (YAVD…AKLL). Residues 553 to 562 (PASTVTGSDG) show a composition bias toward polar residues. 3 N-linked (GlcNAc...) asparagine glycosylation sites follow: Asn-617, Asn-903, and Asn-1030. Helical transmembrane passes span 1062–1082 (IGTL…IISI), 1087–1107 (VPVI…ILIV), and 1115–1135 (YILW…VLPA). A disordered region spans residues 1188 to 1218 (QANGSVWNQQPPTRPPSGYGSMHGFEPYRDY). Over residues 1189–1198 (ANGSVWNQQP) the composition is skewed to polar residues. N-linked (GlcNAc...) asparagine glycosylation occurs at Asn-1190.

Belongs to the chitin synthase family. Class IV subfamily. Post-translationally, maximal activity requires trypsin activation, suggesting a zymogenic nature.

The protein resides in the cell membrane. It catalyses the reaction [(1-&gt;4)-N-acetyl-beta-D-glucosaminyl](n) + UDP-N-acetyl-alpha-D-glucosamine = [(1-&gt;4)-N-acetyl-beta-D-glucosaminyl](n+1) + UDP + H(+). With respect to regulation, activity is stimulated by Mg(2+), and is more inhibited by polyoxin D than by nikkomycin. Its function is as follows. Polymerizes chitin, a structural polymer of the cell wall and septum, by transferring the sugar moiety of UDP-GlcNAc to the non-reducing end of the growing chitin polymer. CHS4 synthesizes a large amount of chitin and appears to play a role in the process of cell separation. CHS4 is particularly well suited for functioning at the higher temperatures associated with its poorly characterized saprophic environment and with human infection. This is Chitin synthase 4 from Exophiala dermatitidis (strain ATCC 34100 / CBS 525.76 / NIH/UT8656) (Black yeast).